The sequence spans 293 residues: Putative ribose uptake protein RbsU (293 aa).

Transmembrane regions (helical) follow at residues 5–24, 34–51, 58–80, 95–114, 121–138, 153–170, 177–199, 212–234, 241–263, and 273–292; these read AILI…TIAS, IFGA…LALF, GGMA…IITF, TTAF…LGNW, IIGF…RMTV, SAVI…IYSA, IGGF…IYAL, VSWQ…LISA, LATG…IFFL, and MITI…TVFI.

Belongs to the GRP transporter (TC 2.A.7.5) family.

It is found in the cell membrane. Its function is as follows. Could be involved in the uptake of ribose. In Staphylococcus epidermidis (strain ATCC 35984 / DSM 28319 / BCRC 17069 / CCUG 31568 / BM 3577 / RP62A), this protein is Putative ribose uptake protein RbsU (rbsU).